The chain runs to 260 residues: MLNILKNWKNQQTAASNLERYTKEDILKGEIPEHIAIIMDGNGRWAKKRSLPRIAGHHEGMKVVKRTTKLANELGVKVLTLYAFSTENWKRPKMEVDFLMKLPEEFLNTYLPELVEENVQVRIIGDETALPAHTLRAIEKAVQDTAQNDGMILNFALNYGGRTEIVSAAKSLAEKVKEGSLNIEDIDESLFSTYLMTESLQDPELLIRTSGEIRLSNFMLWQVAYSEFVFTDVLWPDFKEDHFLQALGEFQQRGRRFGGI.

The active site involves aspartate 40. Aspartate 40 serves as a coordination point for Mg(2+). Residues 41-44, tryptophan 45, arginine 53, histidine 57, and 85-87 contribute to the substrate site; these read GNGR and STE. The Proton acceptor role is filled by asparagine 88. Substrate contacts are provided by residues tryptophan 89, arginine 91, arginine 208, and 214 to 216; that span reads RLS. Glutamate 227 serves as a coordination point for Mg(2+).

This sequence belongs to the UPP synthase family. In terms of assembly, homodimer. Mg(2+) is required as a cofactor.

Functionally, catalyzes the condensation of isopentenyl diphosphate (IPP) with allylic pyrophosphates generating different type of terpenoids. This Bacillus subtilis (strain 168) protein is Isoprenyl transferase.